An 860-amino-acid polypeptide reads, in one-letter code: Protein argonaute-2 (860 aa).

Residue Y2 is modified to 3'-nitrotyrosine. One can recognise a PAZ domain in the interval 230 to 349 (PVIEFVCEVL…LPLEVCNIVA (120 aa)). Residues 312–317 (YFKDRH) are interaction with guide RNA. S388 carries the phosphoserine modification. The 302-residue stretch at 518–819 (LVVVILPGKT…VAFRARYHLV (302 aa)) folds into the Piwi domain. The interval 525-567 (GKTPVYAEVKRVGDTVLGMATQCVQMKNVQRTTPQTLSNLCLK) is interaction with guide RNA. The interval 588–591 (FQQP) is interaction with GW182 family members. Position 598 (D598) interacts with a divalent metal cation. An interaction with GW182 family members region spans residues 651–661 (LIQFYKSTRFK). D670 contributes to the a divalent metal cation binding site. Residue P701 is modified to 4-hydroxyproline. 3 interaction with guide RNA regions span residues 710–711 (KR), 754–762 (HAGIQGTSR), and 791–813 (YVRCTRSVSIPAPAYYAHLVAFR). An a divalent metal cation-binding site is contributed by H808. Phosphoserine occurs at positions 825, 829, 832, and 835.

The protein belongs to the argonaute family. Ago subfamily. Interacts with DICER1 through its Piwi domain and with TARBP2 during assembly of the RNA-induced silencing complex (RISC). Together, DICER1, AGO2 and TARBP2 constitute the trimeric RISC loading complex (RLC), or micro-RNA (miRNA) loading complex (miRLC). Within the RLC/miRLC, DICER1 and TARBP2 are required to process precursor miRNAs (pre-miRNAs) to mature miRNAs and then load them onto AGO2. AGO2 bound to the mature miRNA constitutes the minimal RISC and may subsequently dissociate from DICER1 and TARBP2. Note however that the term RISC has also been used to describe the trimeric RLC/miRLC. The formation of RISC complexes containing siRNAs rather than miRNAs appears to occur independently of DICER1. Interacts with AGO1. Also interacts with DDB1, DDX5, DDX6, DDX20, DHX30, DHX36, DDX47, DHX9, ELAVL, FXR1, GEMIN4, HNRNPF, IGF2BP1, ILF3, IMP8, MATR3, PABPC1, PRMT5, P4HA1, P4HB, RBM4, SART3, TNRC6A, TNRC6B, UPF1 and YBX1. Interacts with the P-body components DCP1A and XRN1. Associates with polysomes and messenger ribonucleoproteins (mNRPs). Interacts with RBM4; the interaction is modulated under stress-induced conditions, occurs under both cell proliferation and differentiation conditions and in an RNA- and phosphorylation-independent manner. Interacts with LIMD1, WTIP and AJUBA. Interacts with TRIM71; the interaction increases in presence of RNA. Interacts with APOBEC3G in an RNA-dependent manner. Interacts with APOBEC3A, APOBEC3C, APOBEC3F and APOBEC3H. Interacts with DICER1, TARBP2, EIF6, MOV10 and RPL7A (60S ribosome subunit); they form a large RNA-induced silencing complex (RISC). Interacts with FMR1. Interacts with ZFP36. Interacts with RC3H1; the interaction is RNA independent. Found in a complex, composed of AGO2, CHD7 and ARB2A. Interacts with SND1 and SYT11. Interacts with CLNK. Interacts with GARRE1. Interacts with GRB2; this interaction is important for the formation of a ternary complex containing GRB2, AGO2 and DICER1. Requires Mg(2+) as cofactor. Mn(2+) is required as a cofactor. Hydroxylated. 4-hydroxylation appears to enhance protein stability but is not required for miRNA-binding or endonuclease activity. Post-translationally, ubiquitinated on surface-exposed lysines by a SCF-like E3 ubiquitin-protein ligase complex containing ZSWIM8 during target-directed microRNA degradation (TDMD), a process that mediates degradation of microRNAs (miRNAs). Ubiquitination by the SCF-like E3 ubiquitin-protein ligase complex containing ZSWIM8 leads to its subsequent degradation, thereby exposing miRNAs for degradation. ZSWIM8 recognizes and binds AGO2 when it is engaged with a TDMD target. In terms of processing, phosphorylation at Ser-388 by AKT3; leads to up-regulate translational repression of microRNA target and down-regulate endonucleolytic cleavage. A phosphorylation cycle of C-terminal serine cluster (Ser-825-Ser-835) regulates the release of target mRNAs. Target-binding leads to phosphorylation of these residues by CSNK1A1, which reduces the affinity of AGO2 for mRNA and enables target release. The ANKRD52-PPP6C phosphatase complex dephosphorylates the residues, which primes AGO2 for binding a new target.

It localises to the cytoplasm. The protein localises to the P-body. It is found in the nucleus. The catalysed reaction is Endonucleolytic cleavage to 5'-phosphomonoester.. Its function is as follows. Required for RNA-mediated gene silencing (RNAi) by the RNA-induced silencing complex (RISC). The 'minimal RISC' appears to include AGO2 bound to a short guide RNA such as a microRNA (miRNA) or short interfering RNA (siRNA). These guide RNAs direct RISC to complementary mRNAs that are targets for RISC-mediated gene silencing. The precise mechanism of gene silencing depends on the degree of complementarity between the miRNA or siRNA and its target. Binding of RISC to a perfectly complementary mRNA generally results in silencing due to endonucleolytic cleavage of the mRNA specifically by AGO2. Binding of RISC to a partially complementary mRNA results in silencing through inhibition of translation, and this is independent of endonuclease activity. May inhibit translation initiation by binding to the 7-methylguanosine cap, thereby preventing the recruitment of the translation initiation factor eIF4-E. May also inhibit translation initiation via interaction with EIF6, which itself binds to the 60S ribosomal subunit and prevents its association with the 40S ribosomal subunit. The inhibition of translational initiation leads to the accumulation of the affected mRNA in cytoplasmic processing bodies (P-bodies), where mRNA degradation may subsequently occur. In some cases RISC-mediated translational repression is also observed for miRNAs that perfectly match the 3' untranslated region (3'-UTR). Can also up-regulate the translation of specific mRNAs under certain growth conditions. Binds to the AU element of the 3'-UTR of the TNF (TNF-alpha) mRNA and up-regulates translation under conditions of serum starvation. Also required for transcriptional gene silencing (TGS), in which short RNAs known as antigene RNAs or agRNAs direct the transcriptional repression of complementary promoter regions. The sequence is that of Protein argonaute-2 (Ago2) from Rattus norvegicus (Rat).